A 397-amino-acid chain; its full sequence is Elongation factor Tu (397 aa).

A tr-type G domain is found at 10–206; it reads KPHVNIGTIG…AVDASIPEPE (197 aa). Positions 19–26 are G1; that stretch reads GHIDHGKT. 19-26 is a GTP binding site; that stretch reads GHIDHGKT. Mg(2+) is bound at residue threonine 26. The interval 62 to 66 is G2; that stretch reads GITIS. Residues 83–86 form a G3 region; that stretch reads DCPG. GTP-binding positions include 83–87 and 138–141; these read DCPGH and NKAD. The tract at residues 138 to 141 is G4; that stretch reads NKAD. A G5 region spans residues 176–178; sequence SAL.

This sequence belongs to the TRAFAC class translation factor GTPase superfamily. Classic translation factor GTPase family. EF-Tu/EF-1A subfamily. In terms of assembly, monomer.

It localises to the cytoplasm. It catalyses the reaction GTP + H2O = GDP + phosphate + H(+). GTP hydrolase that promotes the GTP-dependent binding of aminoacyl-tRNA to the A-site of ribosomes during protein biosynthesis. This is Elongation factor Tu from Parafrankia sp. (strain EAN1pec).